A 257-amino-acid polypeptide reads, in one-letter code: Imidazole glycerol phosphate synthase subunit HisF (257 aa).

Active-site residues include Asp12 and Asp131.

Belongs to the HisA/HisF family. As to quaternary structure, heterodimer of HisH and HisF.

Its subcellular location is the cytoplasm. It catalyses the reaction 5-[(5-phospho-1-deoxy-D-ribulos-1-ylimino)methylamino]-1-(5-phospho-beta-D-ribosyl)imidazole-4-carboxamide + L-glutamine = D-erythro-1-(imidazol-4-yl)glycerol 3-phosphate + 5-amino-1-(5-phospho-beta-D-ribosyl)imidazole-4-carboxamide + L-glutamate + H(+). It participates in amino-acid biosynthesis; L-histidine biosynthesis; L-histidine from 5-phospho-alpha-D-ribose 1-diphosphate: step 5/9. Functionally, IGPS catalyzes the conversion of PRFAR and glutamine to IGP, AICAR and glutamate. The HisF subunit catalyzes the cyclization activity that produces IGP and AICAR from PRFAR using the ammonia provided by the HisH subunit. This chain is Imidazole glycerol phosphate synthase subunit HisF, found in Teredinibacter turnerae (strain ATCC 39867 / T7901).